The sequence spans 416 residues: Coenzyme F420H(2) oxidase (416 aa).

Positions 87, 89, 91, 92, 155, 174, and 239 each coordinate Fe cation. One can recognise a Flavodoxin-like domain in the interval 266 to 407 (AVIVYDTMHY…NCYNMGKELA (142 aa)). Residues 272-277 (TMHYST), 324-327 (TIYD), and 359-364 (SMGGEG) each bind FMN.

In the N-terminal section; belongs to the zinc metallo-hydrolase group 3 family. FMN serves as cofactor. Requires Fe cation as cofactor.

The catalysed reaction is 2 reduced coenzyme F420-(gamma-L-Glu)(n) + O2 = 2 oxidized coenzyme F420-(gamma-L-Glu)(n) + 2 H2O + 2 H(+). Catalyzes the oxidation of F420H(2) with O(2). May be involved in O(2) detoxification, reducing the intracellular O(2) concentration to a level allowing growth at the expense of methane formation. The polypeptide is Coenzyme F420H(2) oxidase (fprA) (Methanocaldococcus jannaschii (strain ATCC 43067 / DSM 2661 / JAL-1 / JCM 10045 / NBRC 100440) (Methanococcus jannaschii)).